A 58-amino-acid polypeptide reads, in one-letter code: Mitochondrial import receptor subunit TOM7 homolog (58 aa).

The Cytoplasmic portion of the chain corresponds to 1 to 16 (MKLSPATKSFIGKTVD). The chain crosses the membrane as a helical span at residues 17–35 (ISTFAIQWGFVPFVVYLGF). Over 36–58 (KKGAEPMPNGQILPLSAMSLLWG) the chain is Mitochondrial intermembrane.

It belongs to the Tom7 family. Forms part of the preprotein translocase complex of the outer mitochondrial membrane (TOM complex).

It is found in the mitochondrion outer membrane. The chain is Mitochondrial import receptor subunit TOM7 homolog (tomm-7) from Caenorhabditis elegans.